A 451-amino-acid polypeptide reads, in one-letter code: Cindoxin reductase (451 aa).

The FAD site is built by Ala-24, Glu-45, Leu-53, and Val-89. Residues 157-160 and 197-198 each bind NADP(+); these read NGNV and RS. Residues Trp-338 and 345-347 each bind FAD; that span reads GGI. Gly-345 lines the NADP(+) pocket.

This sequence belongs to the ferredoxin--NADP reductase type 1 family. FAD is required as a cofactor.

Involved in the degradation of cineol (eucalyptol). Catalyzes the reduction of cindoxin (CinC). In Citrobacter braakii, this protein is Cindoxin reductase (cinB).